Consider the following 462-residue polypeptide: NEDD8-activating enzyme E1 catalytic subunit (462 aa).

Alanine 2 is subject to N-acetylalanine. Residues 53–70 (HPDFEPSTESLQFLLDTC) form an interaction with UBE2M N-terminus region. Residues 100–124 (DMDTIDVSNLNRQFLFRPKDVGRPK) and 148–171 (IQDFNDTFYRQFHIIVCGLDSIIA) contribute to the ATP site. Interaction with UBE2M N-terminus stretches follow at residues 157–161 (RQFHI) and 192–217 (PSSIVPLIDGGTEGFKGNARVILPGM). Positions 227–229 (LYP) are interaction with NEDD8. Catalysis depends on cysteine 237, which acts as the Glycyl thioester intermediate. Interaction with NAE1 regions lie at residues 242–248 (MPRLPEH) and 292–295 (YNIR). The segment at 331 to 338 (IATSAYIP) is interaction with UBE2M N-terminus. An interaction with NEDD8 region spans residues 352–357 (YTYTFE). Residues 368–462 (SQLPQNIQFS…QTVLFKLHFT (95 aa)) form an interaction with UBE2M core domain region.

This sequence belongs to the ubiquitin-activating E1 family. UBA3 subfamily. In terms of assembly, heterodimer of UBA3 and NAE1. Interacts with NEDD8, UBE2F and UBE2M. Binds ESR1 and ESR2 with bound steroid ligand. Interacts with TBATA. In terms of tissue distribution, ubiquitously expressed.

It carries out the reaction ATP + [NEDD8 protein] + [E1 NEDD8-activating enzyme]-L-cysteine = AMP + diphosphate + [E1 NEDD8-activating enzyme]-S-[NEDD8 protein]-yl-L-cysteine.. The protein operates within protein modification; protein neddylation. With respect to regulation, binding of TP53BP2 to the regulatory subunit NAE1 decreases activity. Catalytic subunit of the dimeric UBA3-NAE1 E1 enzyme. E1 activates NEDD8 by first adenylating its C-terminal glycine residue with ATP, thereafter linking this residue to the side chain of the catalytic cysteine, yielding a NEDD8-UBA3 thioester and free AMP. E1 finally transfers NEDD8 to the catalytic cysteine of UBE2M. Down-regulates steroid receptor activity. Necessary for cell cycle progression. The chain is NEDD8-activating enzyme E1 catalytic subunit (Uba3) from Rattus norvegicus (Rat).